The primary structure comprises 245 residues: Uridylate kinase (245 aa).

16-19 (KLSG) lines the ATP pocket. The segment at 24-29 (GDNGFG) is involved in allosteric activation by GTP. Gly59 is a UMP binding site. 2 residues coordinate ATP: Gly60 and Arg64. UMP contacts are provided by residues Asp78 and 139–146 (NGAPFFTT). Positions 167, 173, and 176 each coordinate ATP.

The protein belongs to the UMP kinase family. Homohexamer.

The protein localises to the cytoplasm. It catalyses the reaction UMP + ATP = UDP + ADP. It functions in the pathway pyrimidine metabolism; CTP biosynthesis via de novo pathway; UDP from UMP (UMPK route): step 1/1. Its activity is regulated as follows. Allosterically activated by GTP. Inhibited by UTP. In terms of biological role, catalyzes the reversible phosphorylation of UMP to UDP. The polypeptide is Uridylate kinase (Deinococcus radiodurans (strain ATCC 13939 / DSM 20539 / JCM 16871 / CCUG 27074 / LMG 4051 / NBRC 15346 / NCIMB 9279 / VKM B-1422 / R1)).